The sequence spans 419 residues: MDKFVIQGGVKLEGEVRISGAKNAALPLLAAMILADTPITLKNVPDLKDVRTLVKLIGGLGITMSYEGETVIANTSTLDNQFAPYELVKTMRASILVLGPLLARYGSAKVSLPGGCAIGSRPVDQHLKALEALGAQIEVEAGYVHAKVDGRLKGGEVIFDMVTVGGTENILTAAVLAEGVTTIRNAAREPEITDLALMLIKMGAKIEGLDTDTLVVTGVESLHGCEYSVVADRIETGSYLAAAAITGGKVKTTHTDPNLLESVLDKFEEMGAEVTRGEDWIELDMLGKRPKAVSFRTLPHPEFPTDMQAQIMAVNAIGRGFATISETIFENRFMHVPELARMGANIQVEGNDAVVTGVEKLSAAPVMATDLRASFSLVLAALAAEGETIIDRIYHIDRGYEDIEAKLQGLGAQIKRVSE.

22–23 (KN) lines the phosphoenolpyruvate pocket. Arg92 contributes to the UDP-N-acetyl-alpha-D-glucosamine binding site. The active-site Proton donor is the Cys116. Position 116 is a 2-(S-cysteinyl)pyruvic acid O-phosphothioketal (Cys116). UDP-N-acetyl-alpha-D-glucosamine contacts are provided by residues 121-125 (RPVDQ), Asp306, and Ile328.

The protein belongs to the EPSP synthase family. MurA subfamily.

It is found in the cytoplasm. The enzyme catalyses phosphoenolpyruvate + UDP-N-acetyl-alpha-D-glucosamine = UDP-N-acetyl-3-O-(1-carboxyvinyl)-alpha-D-glucosamine + phosphate. It functions in the pathway cell wall biogenesis; peptidoglycan biosynthesis. Its function is as follows. Cell wall formation. Adds enolpyruvyl to UDP-N-acetylglucosamine. Target for the antibiotic phosphomycin. In Acinetobacter guillouiae (Acinetobacter genomosp. 11), this protein is UDP-N-acetylglucosamine 1-carboxyvinyltransferase.